We begin with the raw amino-acid sequence, 280 residues long: Phospholipase C D (280 aa).

The disordered stretch occupies residues 258-280; the sequence is VPDPQIMPTQETTPTRGIPSGPC.

This sequence belongs to the bacterial phospholipase C family.

The protein localises to the secreted. Its subcellular location is the cell wall. The enzyme catalyses a 1,2-diacyl-sn-glycero-3-phosphocholine + H2O = phosphocholine + a 1,2-diacyl-sn-glycerol + H(+). It carries out the reaction 1,2-dihexadecanoyl-sn-glycero-3-phosphocholine + H2O = 1,2-dihexadecanoyl-sn-glycerol + phosphocholine + H(+). In terms of biological role, involved in virulence. Induces cytotoxic effects on mouse macrophage cell lines, via direct or indirect enzymatic hydrolysis of cell membrane phospholipids. Hydrolyzes phosphatidylcholine. Does not have hemolytic activity. This chain is Phospholipase C D, found in Mycobacterium tuberculosis (strain ATCC 25618 / H37Rv).